Here is a 238-residue protein sequence, read N- to C-terminus: Segregation and condensation protein A (238 aa).

This sequence belongs to the ScpA family. In terms of assembly, component of a cohesin-like complex composed of ScpA, ScpB and the Smc homodimer, in which ScpA and ScpB bind to the head domain of Smc. The presence of the three proteins is required for the association of the complex with DNA.

The protein localises to the cytoplasm. In terms of biological role, participates in chromosomal partition during cell division. May act via the formation of a condensin-like complex containing Smc and ScpB that pull DNA away from mid-cell into both cell halves. This is Segregation and condensation protein A from Macrococcus caseolyticus (strain JCSC5402) (Macrococcoides caseolyticum).